Reading from the N-terminus, the 354-residue chain is MSLFDTINSGGAQLLGVAWPTVWALVRILVVAVVILLCVAYLILWERKLIGWMHVRLGPNRVGPAGLLQPIADVLKLLLKEVIRPTAASRWLYLVAPVMTVVPAFAVWAVIPFQAGAVLANINAGLLYAMAISSIGVYAVILAGWASNSKYAFLGAMRAAAQMVSYEISMGFALVLVLMTAGSLNLSEIVGSQQHGFFAGHGVNFLSWNWLPLLPVFVIYFISGIAETNRHPFDVVEGESEIVAGHMIDYSGMAFALFFLAEYINMIVISALAATLFLGGWDAPFEFLSFIPGIFWLVLKIFALLSVFIWARATFPRYRYDQIMRLGWKVFLPVCVFWVIVVGFWMMSPLNIWK.

8 helical membrane passes run 25 to 45, 91 to 111, 126 to 146, 170 to 190, 205 to 225, 253 to 273, 290 to 310, and 330 to 350; these read LVRI…LILW, WLYL…WAVI, LLYA…AGWA, MGFA…SEIV, FLSW…ISGI, MAFA…SALA, FIPG…VFIW, and VFLP…MSPL.

Belongs to the complex I subunit 1 family. In terms of assembly, NDH-1 is composed of 14 different subunits. Subunits NuoA, H, J, K, L, M, N constitute the membrane sector of the complex.

It is found in the cell inner membrane. The enzyme catalyses a quinone + NADH + 5 H(+)(in) = a quinol + NAD(+) + 4 H(+)(out). NDH-1 shuttles electrons from NADH, via FMN and iron-sulfur (Fe-S) centers, to quinones in the respiratory chain. The immediate electron acceptor for the enzyme in this species is believed to be ubiquinone. Couples the redox reaction to proton translocation (for every two electrons transferred, four hydrogen ions are translocated across the cytoplasmic membrane), and thus conserves the redox energy in a proton gradient. This subunit may bind ubiquinone. The chain is NADH-quinone oxidoreductase subunit H from Burkholderia mallei (strain ATCC 23344).